Here is a 666-residue protein sequence, read N- to C-terminus: Adenylylsulfate reductase subunit alpha (666 aa).

FAD-binding positions include 32–35, 60–61, 67–69, Asn78, Ile193, Ser259, Ser417, 461–462, and Ser472; these read GGMG, DK, SGA, and AD.

Belongs to the FAD-dependent oxidoreductase 2 family. In terms of assembly, heterodimer composed of AprA and AprB. The heterodimers can dimerize to form heterotetramers. The cofactor is FAD.

The protein resides in the cytoplasm. The catalysed reaction is sulfite + A + AMP + 2 H(+) = adenosine 5'-phosphosulfate + AH2. Functionally, catalytic subunit of the adenylylsulfate reductase which catalyzes reversibly the reduction of adenosine 5'-phosphosulfate (APS) to sulfite and AMP during dissimilatory sulfate reduction. The polypeptide is Adenylylsulfate reductase subunit alpha (Megalodesulfovibrio gigas (strain ATCC 19364 / DSM 1382 / NCIMB 9332 / VKM B-1759) (Desulfovibrio gigas)).